The chain runs to 335 residues: MLSYAPENAYQRLSTMENKKVFPKEKSGLHPRNRHRSRYDFDALSVSCPELIPFLAPTAYGDISIDFASPLAVKMLNKALLKHFYGIEYWDIPADFLCPPIPGRADYVHHLADLLASCNDGVIPQGKNVAVLDIGVGANCIYPIIGQREYGWRFTGTDIDPQALSAAKMVVSMNPTLKNTLRLKQQKNPQAIFDGILAVNERYDATLCNPPFHGSAEEAAATTRRKLHKLGKSEVAAKPVQNFGGKNSELWCEGGEEGFVSRMVAESATKAQNCFWFTSLISKKTTLPAIYHALRYANAVEVRTIDMAQGQKVSRFVAWTFLTPEQQAAWKAERW.

The protein belongs to the methyltransferase superfamily. METTL16/RlmF family.

The protein localises to the cytoplasm. It catalyses the reaction adenosine(1618) in 23S rRNA + S-adenosyl-L-methionine = N(6)-methyladenosine(1618) in 23S rRNA + S-adenosyl-L-homocysteine + H(+). Specifically methylates the adenine in position 1618 of 23S rRNA. This Yersinia enterocolitica serotype O:8 / biotype 1B (strain NCTC 13174 / 8081) protein is Ribosomal RNA large subunit methyltransferase F.